A 513-amino-acid polypeptide reads, in one-letter code: MQLNSTEISDLIKQRIEQFEVVSESRNEGTIVAVSDGIIRIHGLADVMQGEMIELPGSRFAIALNLERDSVGAVVMGPYADLAEGVKVKTTGRILEVPVGRGLLGRVVNTLGEPIDGKGAIDNDGFSPVEVIAPGVIERKSVDQPVQTGYKAVDAMIPIGRGQRELIIGDRQTGKTAMAIDAIINQRDSGIKCVYVAVGQKASTIANVVRKLEEHGALANTIVVVATASEAAALQYLAPYSGCAMGEYFRDRGEDALIVYDDLSKQAVAYRQISLLLKRPPGREAYPGDVFYLHSRLLERASRVNEEYVEKFTKGAVTGKTGSLTALPIIETQAGDVSAFVPTNVISITDGQIFLETDLFNSGLRPAVNPGISVSRVGGAAQTKIIKKLSGGIRTALAQYRELAAFSQFASDLDDATRAQLEHGVRVTELMKQKQYAPMSVAAQAVSIFAAEKGYLKGVELKKVGDFEAALLSYMNSEHAALIKLINETGDYNADIEAELKAGLDKFVATQTW.

An ATP-binding site is contributed by Gly169 to Thr176.

Belongs to the ATPase alpha/beta chains family. In terms of assembly, F-type ATPases have 2 components, CF(1) - the catalytic core - and CF(0) - the membrane proton channel. CF(1) has five subunits: alpha(3), beta(3), gamma(1), delta(1), epsilon(1). CF(0) has three main subunits: a(1), b(2) and c(9-12). The alpha and beta chains form an alternating ring which encloses part of the gamma chain. CF(1) is attached to CF(0) by a central stalk formed by the gamma and epsilon chains, while a peripheral stalk is formed by the delta and b chains.

It localises to the cell inner membrane. It catalyses the reaction ATP + H2O + 4 H(+)(in) = ADP + phosphate + 5 H(+)(out). Functionally, produces ATP from ADP in the presence of a proton gradient across the membrane. The alpha chain is a regulatory subunit. This chain is ATP synthase subunit alpha, found in Shewanella oneidensis (strain ATCC 700550 / JCM 31522 / CIP 106686 / LMG 19005 / NCIMB 14063 / MR-1).